Consider the following 374-residue polypeptide: Flap endonuclease 1 (374 aa).

Residues 1 to 105 (MGVKGLNQLI…GELEKRMIRK (105 aa)) form an N-domain region. Mg(2+) is bound at residue D34. Residues R47 and R71 each contribute to the DNA site. Residues D87, E159, E161, D180, and D182 each contribute to the Mg(2+) site. Residues 123-254 (EMVRYEKRSV…VTAFKLIKEH (132 aa)) are I-domain. E159 contacts DNA. G232 and D234 together coordinate DNA. Position 234 (D234) interacts with Mg(2+). The tract at residues 341-349 (VQGRLDGFF) is interaction with PCNA. Positions 354 to 365 (TEKRKPEQDKKT) are enriched in basic and acidic residues. A disordered region spans residues 354 to 374 (TEKRKPEQDKKTKGSKKAKKK).

Belongs to the XPG/RAD2 endonuclease family. FEN1 subfamily. In terms of assembly, interacts with PCNA. Three molecules of FEN1 bind to one PCNA trimer with each molecule binding to one PCNA monomer. PCNA stimulates the nuclease activity without altering cleavage specificity. Mg(2+) is required as a cofactor. Post-translationally, phosphorylated. Phosphorylation upon DNA damage induces relocalization to the nuclear plasma.

It is found in the nucleus. The protein localises to the nucleolus. The protein resides in the nucleoplasm. Its subcellular location is the mitochondrion. Functionally, structure-specific nuclease with 5'-flap endonuclease and 5'-3' exonuclease activities involved in DNA replication and repair. During DNA replication, cleaves the 5'-overhanging flap structure that is generated by displacement synthesis when DNA polymerase encounters the 5'-end of a downstream Okazaki fragment. It enters the flap from the 5'-end and then tracks to cleave the flap base, leaving a nick for ligation. Also involved in the long patch base excision repair (LP-BER) pathway, by cleaving within the apurinic/apyrimidinic (AP) site-terminated flap. Acts as a genome stabilization factor that prevents flaps from equilibrating into structures that lead to duplications and deletions. Also possesses 5'-3' exonuclease activity on nicked or gapped double-stranded DNA, and exhibits RNase H activity. Also involved in replication and repair of rDNA and in repairing mitochondrial DNA. This is Flap endonuclease 1 from Meyerozyma guilliermondii (strain ATCC 6260 / CBS 566 / DSM 6381 / JCM 1539 / NBRC 10279 / NRRL Y-324) (Yeast).